We begin with the raw amino-acid sequence, 380 residues long: Erythronate-4-phosphate dehydrogenase (380 aa).

Substrate is bound by residues serine 45 and threonine 66. NAD(+) is bound by residues aspartate 146, threonine 174, 205-207 (ASR), and aspartate 231. The active site involves arginine 207. Glutamate 236 is an active-site residue. Histidine 253 (proton donor) is an active-site residue. Residue glycine 256 coordinates NAD(+). Position 257 (tyrosine 257) interacts with substrate.

The protein belongs to the D-isomer specific 2-hydroxyacid dehydrogenase family. PdxB subfamily. Homodimer.

It localises to the cytoplasm. It carries out the reaction 4-phospho-D-erythronate + NAD(+) = (R)-3-hydroxy-2-oxo-4-phosphooxybutanoate + NADH + H(+). The protein operates within cofactor biosynthesis; pyridoxine 5'-phosphate biosynthesis; pyridoxine 5'-phosphate from D-erythrose 4-phosphate: step 2/5. Functionally, catalyzes the oxidation of erythronate-4-phosphate to 3-hydroxy-2-oxo-4-phosphonooxybutanoate. This is Erythronate-4-phosphate dehydrogenase from Pseudomonas fluorescens (strain SBW25).